We begin with the raw amino-acid sequence, 194 residues long: 7-methyl-GTP pyrophosphatase (194 aa).

The Proton acceptor role is filled by Asp70.

It belongs to the Maf family. YceF subfamily. A divalent metal cation serves as cofactor.

It is found in the cytoplasm. It carries out the reaction N(7)-methyl-GTP + H2O = N(7)-methyl-GMP + diphosphate + H(+). Nucleoside triphosphate pyrophosphatase that hydrolyzes 7-methyl-GTP (m(7)GTP). May have a dual role in cell division arrest and in preventing the incorporation of modified nucleotides into cellular nucleic acids. The protein is 7-methyl-GTP pyrophosphatase of Vibrio vulnificus (strain CMCP6).